The primary structure comprises 263 residues: tRNA pseudouridine synthase A (263 aa).

D51 (nucleophile) is an active-site residue. A substrate-binding site is contributed by Y109.

It belongs to the tRNA pseudouridine synthase TruA family. Homodimer.

It carries out the reaction uridine(38/39/40) in tRNA = pseudouridine(38/39/40) in tRNA. In terms of biological role, formation of pseudouridine at positions 38, 39 and 40 in the anticodon stem and loop of transfer RNAs. The polypeptide is tRNA pseudouridine synthase A (Mannheimia succiniciproducens (strain KCTC 0769BP / MBEL55E)).